The primary structure comprises 163 residues: Flagellar assembly factor FliW (163 aa).

A compositionally biased stretch (basic and acidic residues) spans 136 to 156 (PFFETSEKKQSGLQRLERQPE). The interval 136-163 (PFFETSEKKQSGLQRLERQPEKSVPPAG) is disordered.

The protein belongs to the FliW family. In terms of assembly, interacts with translational regulator CsrA and flagellin(s).

Its subcellular location is the cytoplasm. Its function is as follows. Acts as an anti-CsrA protein, binds CsrA and prevents it from repressing translation of its target genes, one of which is flagellin. Binds to flagellin and participates in the assembly of the flagellum. The sequence is that of Flagellar assembly factor FliW from Geotalea uraniireducens (strain Rf4) (Geobacter uraniireducens).